The chain runs to 1491 residues: Terminal uridylyltransferase 7 (1491 aa).

The residue at position 64 (Thr64) is a Phosphothreonine. Phosphoserine occurs at positions 132 and 172. The interval 165 to 203 is disordered; the sequence is MSEMEAGSPENKKQRSRPRKPRRTRTEDSEQDGDLDGPV. Basic residues predominate over residues 178–187; the sequence is QRSRPRKPRR. Residues 244 to 274 form a Matrin-type zinc finger; it reads YTCKLCDALIDSIPFAHKHIKEKRHKKNLKE. One can recognise a PAP-associated 1 domain in the interval 551-600; the sequence is VGQLWVELLRFYALEFNLADLVISIRVKELISRESKDWPKKRIAIEDPYS. Ser600 and Ser747 each carry phosphoserine. 2 disordered regions span residues 740 to 774 and 834 to 911; these read AELPETGSDNEEVRRKTKHPLSTDDQGLSSSKHPE and QSRT…CGEN. Positions 844 to 857 are enriched in acidic residues; sequence DDEEEEEEEEEEEE. At Thr865 the chain carries Phosphothreonine. Positions 885–897 are enriched in acidic residues; the sequence is GEEDALSEEDDLA. A Phosphoserine modification is found at Ser891. Residues 947 to 1491 are sufficient for monouridylation activity; the sequence is RKLTFTKGKS…ASVKRTQQES (545 aa). Residues 959–976 form a CCHC-type 1 zinc finger; the sequence is VVCSLCKREGHLKKDCPE. UTP is bound by residues 1043 to 1046, 1053 to 1056, Asn1126, Lys1148, 1166 to 1170, and His1282; these read SSKN, SDLD, and SYAYT. Mg(2+)-binding residues include Asp1054 and Asp1056. The PAP-associated 2 domain maps to 1230 to 1282; it reads VGQLWLGLLRFYTEEFDFKEHVISIRRKSLLTTFKKQWTSKYIVIEDPFDLNH. Residues 1341-1358 form a CCHC-type 2 zinc finger; the sequence is RCCRICGKIGHFMKDCPM. 2 disordered regions span residues 1362–1399 and 1463–1491; these read VRRRRDQEDTPNQRYSESKEKRSKEDKEIQNKYTEKEV and PQFKGSPGSLSSKYMTQGRASVKRTQQES. Over residues 1377 to 1399 the composition is skewed to basic and acidic residues; that stretch reads SESKEKRSKEDKEIQNKYTEKEV. The CCHC-type 3 zinc finger occupies 1447–1464; it reads KRCFICGREGHIKKECPQ. Residues 1470–1481 are compositionally biased toward polar residues; the sequence is GSLSSKYMTQGR.

This sequence belongs to the DNA polymerase type-B-like family. Mg(2+) serves as cofactor. The cofactor is Mn(2+).

The protein resides in the cytoplasm. It carries out the reaction RNA(n) + UTP = RNA(n)-3'-uridine ribonucleotide + diphosphate. Uridylyltransferase that mediates the terminal uridylation of mRNAs with short (less than 25 nucleotides) poly(A) tails, hence facilitating global mRNA decay. Essential for both oocyte maturation and fertility. Through 3' terminal uridylation of mRNA, sculpts, with TUT7, the maternal transcriptome by eliminating transcripts during oocyte growth. Involved in microRNA (miRNA)-induced gene silencing through uridylation of deadenylated miRNA targets. Also acts as a suppressor of miRNA biogenesis by mediating the terminal uridylation of miRNA precursors, including that of let-7 (pre-let-7). Uridylated pre-let-7 RNA is not processed by Dicer and undergo degradation. Pre-let-7 uridylation is strongly enhanced in the presence of LIN28A. Due to functional redundancy between ZCCHC6 and ZCCHC11, the identification of the specific role of each of these proteins is difficult. Involved in microRNA (miRNA)-induced gene silencing through uridylation of deadenylated miRNA targets. Also functions as an integral regulator of microRNA biogenesiS using 3 different uridylation mechanisms. Acts as a suppressor of miRNA biogenesis by mediating the terminal uridylation of some miRNA precursors, including that of let-7 (pre-let-7). Uridylated pre-let-7 RNA is not processed by Dicer and undergo degradation. Pre-let-7 oligouridylation is strongly enhanced in the presence of LIN28A. In the absence of LIN28A, TUT7 and TUT4 monouridylate group II pre-miRNAs, which includes most of pre-let7 members, that shapes an optimal 3' end overhang for efficient processing. Add oligo-U tails to truncated pre-miRNAS with a 5' overhang which may promote rapid degradation of non-functional pre-miRNA species. Does not play a role in replication-dependent histone mRNA degradation. Due to functional redundancy between TUT4 and TUT7, the identification of the specific role of each of these proteins is difficult. TUT4 and TUT7 restrict retrotransposition of long interspersed element-1 (LINE-1) in cooperation with MOV10 counteracting the RNA chaperonne activity of L1RE1. TUT7 uridylates LINE-1 mRNAs in the cytoplasm which inhibits initiation of reverse transcription once in the nucleus, whereas uridylation by TUT4 destabilizes mRNAs in cytoplasmic ribonucleoprotein granules. The protein is Terminal uridylyltransferase 7 of Mus musculus (Mouse).